A 1916-amino-acid polypeptide reads, in one-letter code: Diacylglycerol kinase eta (1916 aa).

Residues 1-36 (MAHIKLDTLDVVQRPGTTRRSNSNSGRSSACSSGSL) form a disordered region. Positions 19-36 (RRSNSNSGRSSACSSGSL) are enriched in low complexity. One can recognise a PH domain in the interval 82–175 (AIIKEGFLLK…WLGSLKTATT (94 aa)). 2 Phorbol-ester/DAG-type zinc fingers span residues 195–245 (HHHW…IANC) and 268–319 (PHQW…AVAC). Positions 350-486 (GNFSPLLVFV…DRWSIMVFEK (137 aa)) constitute a DAGKc domain. Basic and acidic residues predominate over residues 623–644 (DEINTKERRSSRSLRSSEKEAL). Disordered stretches follow at residues 623–648 (DEIN…QSRA), 846–874 (DRGK…KEDN), 1018–1067 (TLCS…DDNP), and 1183–1214 (TSTS…SVKP). The SAM domain maps to 1853-1916 (WSVNEVVTWL…LQAIKDLSEN (64 aa)).

It belongs to the eukaryotic diacylglycerol kinase family.

The protein localises to the cytoplasm. The enzyme catalyses a 1,2-diacyl-sn-glycerol + ATP = a 1,2-diacyl-sn-glycero-3-phosphate + ADP + H(+). Functionally, phosphorylates diacylglycerol (DAG) to generate phosphatidic acid (PA). The polypeptide is Diacylglycerol kinase eta (Drosophila ananassae (Fruit fly)).